We begin with the raw amino-acid sequence, 243 residues long: ATP synthase subunit a (243 aa).

7 helical membrane-spanning segments follow: residues 29–49 (NASLFMVLSTLIISLFCYIGL), 54–74 (ILPNSMQLIIEAIYNFIVSTI), 89–109 (VFTIFTFIATCNLLGVLPLGF), 114–134 (HIAVTFAISMVVFISVTAIGF), 144–164 (ILLPKGTPGWLAPMMVFIELF), 182–202 (IAGHTIIKVIAGFVIKMNIFL), and 208–228 (AFIIILIGFEIFVAILQAYIF).

It belongs to the ATPase A chain family. In terms of assembly, F-type ATPases have 2 components, CF(1) - the catalytic core - and CF(0) - the membrane proton channel. CF(1) has five subunits: alpha(3), beta(3), gamma(1), delta(1), epsilon(1). CF(0) has three main subunits: a(1), b(2) and c(9-12). The alpha and beta chains form an alternating ring which encloses part of the gamma chain. CF(1) is attached to CF(0) by a central stalk formed by the gamma and epsilon chains, while a peripheral stalk is formed by the delta and b chains.

The protein localises to the cell inner membrane. In terms of biological role, key component of the proton channel; it plays a direct role in the translocation of protons across the membrane. This Ehrlichia chaffeensis (strain ATCC CRL-10679 / Arkansas) protein is ATP synthase subunit a.